A 381-amino-acid polypeptide reads, in one-letter code: Arf-GAP with dual PH domain-containing protein 2 (381 aa).

The Arf-GAP domain maps to 9-131 (KRLLELLRAP…FMADGETISL (123 aa)). A C4-type zinc finger spans residues 25 to 48 (CADCGAADPDWASYKLGIFICLNC). PH domains are found at residues 132–233 (PGNR…AARL) and 255–361 (NYLK…GVLS).

Highly expressed in placenta, spleen, kidney, skeletal muscle and adrenal gland. Weakly expressed in thyroid, liver, heart, lung, small intestine, peripheral blood leukocytes. Not detected in spinal cord, brain, stomach, trachea, colon, lymph node and bone marrow.

It is found in the cytoplasm. The protein localises to the cell membrane. In terms of biological role, GTPase-activating protein for the ADP ribosylation factor family (Potential). Binds phosphatidylinositol 3,4,5-trisphosphate (PtdInsP3) and inositol 1,3,4,5-tetrakisphosphate (InsP4). Possesses a stoichiometry of two binding sites for InsP4 with identical affinity. This chain is Arf-GAP with dual PH domain-containing protein 2 (ADAP2), found in Homo sapiens (Human).